A 102-amino-acid chain; its full sequence is Large ribosomal subunit protein bL21 (102 aa).

This sequence belongs to the bacterial ribosomal protein bL21 family. In terms of assembly, part of the 50S ribosomal subunit. Contacts protein L20.

In terms of biological role, this protein binds to 23S rRNA in the presence of protein L20. The protein is Large ribosomal subunit protein bL21 of Cutibacterium acnes (strain DSM 16379 / KPA171202) (Propionibacterium acnes).